A 240-amino-acid chain; its full sequence is MAISPSRVFAALLPTAGDIYRDENEPGMGGHTVTVQRTQNSAREVQVTGSAEVSCPADRATVSVSFKNSKESVNDVTNSISRRVEYILQTLRQHHVKGEELTVTRHIYRADDLYHMEALVMVVFSDFGQMERVCIVLLEKLDKSVCVSTPHFYHSEECLGLLRRSVCVAAVENARLKASEMSSMLGQTLGHPLLVREEEATERDGGRQGGEGVHRPSISATSRVFVTFNLRHKDRTRKKI.

It belongs to the IRAK1BP1 family.

It localises to the cytoplasm. The protein resides in the nucleus. In terms of biological role, may be part of a signaling pathway that leads to NF-kappa-B activation. This Oncorhynchus mykiss (Rainbow trout) protein is Interleukin-1 receptor-associated kinase 1-binding protein 1 homolog (irak1bp1).